Reading from the N-terminus, the 361-residue chain is Phosphoserine aminotransferase (361 aa).

Position 42 (arginine 42) interacts with L-glutamate. Pyridoxal 5'-phosphate contacts are provided by residues 76 to 77, tryptophan 102, threonine 153, aspartate 173, and glutamine 196; that span reads AR. At lysine 197 the chain carries N6-(pyridoxal phosphate)lysine. Position 238–239 (238–239) interacts with pyridoxal 5'-phosphate; sequence NT.

It belongs to the class-V pyridoxal-phosphate-dependent aminotransferase family. SerC subfamily. Homodimer. Requires pyridoxal 5'-phosphate as cofactor.

The protein resides in the cytoplasm. It carries out the reaction O-phospho-L-serine + 2-oxoglutarate = 3-phosphooxypyruvate + L-glutamate. The catalysed reaction is 4-(phosphooxy)-L-threonine + 2-oxoglutarate = (R)-3-hydroxy-2-oxo-4-phosphooxybutanoate + L-glutamate. Its pathway is amino-acid biosynthesis; L-serine biosynthesis; L-serine from 3-phospho-D-glycerate: step 2/3. It functions in the pathway cofactor biosynthesis; pyridoxine 5'-phosphate biosynthesis; pyridoxine 5'-phosphate from D-erythrose 4-phosphate: step 3/5. Functionally, catalyzes the reversible conversion of 3-phosphohydroxypyruvate to phosphoserine and of 3-hydroxy-2-oxo-4-phosphonooxybutanoate to phosphohydroxythreonine. The chain is Phosphoserine aminotransferase from Pectobacterium carotovorum subsp. carotovorum (strain PC1).